Here is a 438-residue protein sequence, read N- to C-terminus: Exodeoxyribonuclease 7 large subunit (438 aa).

The tract at residues 406–438 is disordered; that stretch reads ATSTGPTDDIPSSAARLPASPAPDARPASGPES.

Belongs to the XseA family. In terms of assembly, heterooligomer composed of large and small subunits.

It is found in the cytoplasm. It carries out the reaction Exonucleolytic cleavage in either 5'- to 3'- or 3'- to 5'-direction to yield nucleoside 5'-phosphates.. Its function is as follows. Bidirectionally degrades single-stranded DNA into large acid-insoluble oligonucleotides, which are then degraded further into small acid-soluble oligonucleotides. This chain is Exodeoxyribonuclease 7 large subunit, found in Clavibacter sepedonicus (Clavibacter michiganensis subsp. sepedonicus).